The primary structure comprises 236 residues: Histone H1 (236 aa).

A compositionally biased stretch (basic and acidic residues) spans 1–10 (MPPKKTETKA). Disordered regions lie at residues 1 to 36 (MPPKKTETKAADASAAAAPAPAAAPTSAPKTKSPST) and 94 to 236 (KGVF…AEKA). The span at 11–36 (ADASAAAAPAPAAAPTSAPKTKSPST) shows a compositional bias: low complexity. In terms of domain architecture, H15 spans 36–111 (THASYLDMIT…GPSGGTKLAK (76 aa)). The segment covering 109–122 (LAKKVAKPAPKKAA) has biased composition (basic residues). Over residues 123 to 150 (PKKETKEKKPAAAKKEGAAKKETKEKKA) the composition is skewed to basic and acidic residues. Residues 153-162 (AKKAAAPKKA) show a composition bias toward low complexity. The segment covering 165–174 (PKKEVKEKKA) has biased composition (basic and acidic residues). The segment covering 202–220 (AKSTAKPAAAKKAAAPKKA) has biased composition (low complexity). A compositionally biased stretch (basic and acidic residues) spans 224-236 (KKAEKAEPAAEKA).

This sequence belongs to the histone H1/H5 family.

It is found in the nucleus. Its subcellular location is the chromosome. Functionally, could act as an H1-type linker histone. The protein is Histone H1 (hH1) of Neurospora crassa (strain ATCC 24698 / 74-OR23-1A / CBS 708.71 / DSM 1257 / FGSC 987).